The chain runs to 340 residues: Phosphate acyltransferase (340 aa).

Belongs to the PlsX family. In terms of assembly, homodimer. Probably interacts with PlsY.

It localises to the cytoplasm. The enzyme catalyses a fatty acyl-[ACP] + phosphate = an acyl phosphate + holo-[ACP]. Its pathway is lipid metabolism; phospholipid metabolism. Catalyzes the reversible formation of acyl-phosphate (acyl-PO(4)) from acyl-[acyl-carrier-protein] (acyl-ACP). This enzyme utilizes acyl-ACP as fatty acyl donor, but not acyl-CoA. This is Phosphate acyltransferase from Nostoc punctiforme (strain ATCC 29133 / PCC 73102).